The following is a 405-amino-acid chain: 8-amino-7-oxononanoate synthase 1 (405 aa).

Arg-29 lines the substrate pocket. 116-117 lines the pyridoxal 5'-phosphate pocket; it reads GY. Position 141 (His-141) interacts with substrate. Positions 187, 215, and 247 each coordinate pyridoxal 5'-phosphate. Lys-250 is subject to N6-(pyridoxal phosphate)lysine. Thr-368 is a binding site for substrate.

The protein belongs to the class-II pyridoxal-phosphate-dependent aminotransferase family. BioF subfamily. In terms of assembly, homodimer. Pyridoxal 5'-phosphate serves as cofactor.

It carries out the reaction 6-carboxyhexanoyl-[ACP] + L-alanine + H(+) = (8S)-8-amino-7-oxononanoate + holo-[ACP] + CO2. It participates in cofactor biosynthesis; biotin biosynthesis. Its function is as follows. Catalyzes the decarboxylative condensation of pimeloyl-[acyl-carrier protein] and L-alanine to produce 8-amino-7-oxononanoate (AON), [acyl-carrier protein], and carbon dioxide. This Polaromonas sp. (strain JS666 / ATCC BAA-500) protein is 8-amino-7-oxononanoate synthase 1.